A 284-amino-acid polypeptide reads, in one-letter code: 2,3,4,5-tetrahydropyridine-2,6-dicarboxylate N-succinyltransferase (284 aa).

Substrate contacts are provided by Arg-111 and Asp-148.

The protein belongs to the transferase hexapeptide repeat family. Homotrimer.

The protein localises to the cytoplasm. It catalyses the reaction (S)-2,3,4,5-tetrahydrodipicolinate + succinyl-CoA + H2O = (S)-2-succinylamino-6-oxoheptanedioate + CoA. Its pathway is amino-acid biosynthesis; L-lysine biosynthesis via DAP pathway; LL-2,6-diaminopimelate from (S)-tetrahydrodipicolinate (succinylase route): step 1/3. The sequence is that of 2,3,4,5-tetrahydropyridine-2,6-dicarboxylate N-succinyltransferase from Chelativorans sp. (strain BNC1).